Here is a 212-residue protein sequence, read N- to C-terminus: Adenylate kinase (212 aa).

10-15 (GAGKGT) contributes to the ATP binding site. An NMP region spans residues 30-59 (STGDMFRAAMANQTEMGRLAKSYIDKGELV). AMP-binding positions include Thr31, Arg36, 57-59 (ELV), 86-89 (GYPR), and Gln93. The tract at residues 127-159 (GRIINRKTGETFHKVFNPPVDYKEEDYYQREDD) is LID. Residues Arg128 and 137–138 (TF) contribute to the ATP site. AMP is bound by residues Arg156 and Arg167. Gln195 serves as a coordination point for ATP.

It belongs to the adenylate kinase family. Monomer.

The protein localises to the cytoplasm. The enzyme catalyses AMP + ATP = 2 ADP. It participates in purine metabolism; AMP biosynthesis via salvage pathway; AMP from ADP: step 1/1. Catalyzes the reversible transfer of the terminal phosphate group between ATP and AMP. Plays an important role in cellular energy homeostasis and in adenine nucleotide metabolism. The chain is Adenylate kinase from Streptococcus agalactiae serotype Ia (strain ATCC 27591 / A909 / CDC SS700).